Reading from the N-terminus, the 64-residue chain is Alternative prion protein (64 aa).

Positions 1–22 are disordered; it reads MEHWGEPIPGTGQSWRQPLSTS. Over residues 11 to 22 the composition is skewed to polar residues; it reads TGQSWRQPLSTS. Residues 40-58 traverse the membrane as a helical segment; that stretch reads WRWLGSAPWWWLGTATWWW.

It is found in the mitochondrion outer membrane. This chain is Alternative prion protein, found in Ovis aries (Sheep).